Here is a 639-residue protein sequence, read N- to C-terminus: Carbon monoxide dehydrogenase (639 aa).

[4Fe-4S] cluster is bound by residues C41, C49, C50, C53, C58, and C72. The [Ni-4Fe-4S] cluster site is built by H265, C300, C338, C451, C481, and C531.

The protein belongs to the Ni-containing carbon monoxide dehydrogenase family. As to quaternary structure, homodimer. It depends on [4Fe-4S] cluster as a cofactor. Requires [Ni-4Fe-4S] cluster as cofactor.

It localises to the cytoplasm. The protein resides in the cell inner membrane. It carries out the reaction CO + 2 oxidized [2Fe-2S]-[ferredoxin] + H2O = 2 reduced [2Fe-2S]-[ferredoxin] + CO2 + 2 H(+). Its function is as follows. Allows growth in a CO-dependent manner in the dark. CODH oxidizes carbon monoxide coupled, via CooF, to the reduction of a hydrogen cation by a hydrogenase (possibly CooH). The protein is Carbon monoxide dehydrogenase (cooS) of Rhodospirillum rubrum.